A 578-amino-acid chain; its full sequence is MSHQERIASQRRTTAEVPMHRSTANQSKRSRSPFASTRRRWDDSESSGASLAVESEDYSRYPPREYRASGSRRGLAYGHIDTVVARDSEEEGAGPVDRLPVRGKAGKFKDDPEKGARSSRFTSVNHDAKEECGKVESPPAARCSARRAELSKQNGSSASQISSAEGRAAAKGNNSLERERQNLPARPSRAPVSICGGGENTPKSAEEPVVRPKVRNVATPNCMKPKVFFDTDDDDDVPHSTSRWRDAADAEEAHAEGLARRGRGEAASSSEPRYAEDQDARSEQAKADKVPRRRRTMADPDFWAYTDDYYRYYEEDSDSDKEWMAALRRKYRSREQPQSSSGESWELLPGKEELERQQAGAGSLASAGSNGSGYPEEVQDPSLQEEEQASLEEGEIPWLRYNENESSSEGDNESTHELIQPGMFMLDGNNNLEDDSSVSEDLEVDWSLFDGFADGLGVAEAISYVDPQFLTYMALEERLAQAMETALAHLESLAVDVEVANPPASKESIDALPEILVTEDHGAVGQEMCCPICCSEYVKGEVATELPCHHYFHKPCVSIWLQKSGTCPVCRCMFPPPL.

Residues 1 to 298 (MSHQERIASQ…KVPRRRRTMA (298 aa)) form a disordered region. 2 stretches are compositionally biased toward basic and acidic residues: residues 57–67 (DYSRYPPREYR) and 107–116 (KFKDDPEKGA). Over residues 151 to 163 (SKQNGSSASQISS) the composition is skewed to polar residues. A Phosphothreonine modification is found at threonine 231. 2 stretches are compositionally biased toward basic and acidic residues: residues 243-264 (RWRDAADAEEAHAEGLARRGRG) and 273-290 (RYAEDQDARSEQAKADKV). Serine 317 and serine 319 each carry phosphoserine. Residues 332–397 (RSREQPQSSS…QASLEEGEIP (66 aa)) are disordered. Residues 359-373 (AGAGSLASAGSNGSG) show a composition bias toward low complexity. Over residues 377 to 395 (EVQDPSLQEEEQASLEEGE) the composition is skewed to acidic residues. Residues 530–571 (CPICCSEYVKGEVATELPCHHYFHKPCVSIWLQKSGTCPVCR) form an RING-type zinc finger.

Binds ubiquitin-conjugating enzymes (E2s). Binds, in vitro and in vivo, the MAGE conserved domain of MAGED1. Binds weakly Necdin, in vitro. Interacts with UBE2D2. Substrate for E2-dependent ubiquitination. Expressed in brain, liver, kidney. Highest levels in brain where it is found in many regions including cortical and subcortical areas and in neurons of the amygdala. Weak expression also found in testis. Also expressed in developing embryo.

It carries out the reaction S-ubiquitinyl-[E2 ubiquitin-conjugating enzyme]-L-cysteine + [acceptor protein]-L-lysine = [E2 ubiquitin-conjugating enzyme]-L-cysteine + N(6)-ubiquitinyl-[acceptor protein]-L-lysine.. In terms of biological role, has E2-dependent E3 ubiquitin-protein ligase activity. Ubiquitinates MAGED1 antigen leading to its subsequent degradation by proteasome. May be involved in protein sorting. The sequence is that of E3 ubiquitin-protein ligase Praja-1 (Pja1) from Mus musculus (Mouse).